We begin with the raw amino-acid sequence, 120 residues long: Small ribosomal subunit protein eS25 (120 aa).

The disordered stretch occupies residues 1–32; sequence MPPKAGQTKKAKMEAANKGAKKTTKKWSKGQS. Positions 19–28 are enriched in basic residues; that stretch reads GAKKTTKKWS.

Belongs to the eukaryotic ribosomal protein eS25 family.

The polypeptide is Small ribosomal subunit protein eS25 (RPS25) (Leishmania infantum).